Reading from the N-terminus, the 105-residue chain is Delta-hexatoxin-Mg1a (105 aa).

A signal peptide spans 1–18 (MKTLVIACVALVLVVVHG). The propeptide occupies 19 to 60 (EVIEEVNEKQLQESVEEKYSLLQRLEKLDEAITAEENRNSRV). Cystine bridges form between Cys63-Cys77, Cys70-Cys82, Cys76-Cys93, and Cys78-Cys105.

Belongs to the neurotoxin 06 (delta-actx) family. In terms of tissue distribution, expressed by the venom gland.

It localises to the secreted. Functionally, selectively slows channel inactivation of mammalian Nav1.1/SCN1A, Nav1.3/SCN3A, and Nav1.6/SCN8A and shows higher affinity for insect Nav1/para channels (site 3). Induces tonic repetitive firing of nerve impulses in insect neurons accompanied by plateau potentials. This is Delta-hexatoxin-Mg1a from Macrothele gigas (Japanese funnel web spider).